The chain runs to 812 residues: Probable inorganic carbon transporter subunit DabA (812 aa).

Zn(2+) contacts are provided by C338, D340, H498, and C513.

Belongs to the inorganic carbon transporter (TC 9.A.2) DabA family. In terms of assembly, forms a complex with DabB. The cofactor is Zn(2+).

It is found in the cell inner membrane. Part of an energy-coupled inorganic carbon pump. This is Probable inorganic carbon transporter subunit DabA from Methylobacterium sp. (strain 4-46).